An 89-amino-acid polypeptide reads, in one-letter code: uncharacterized protein (89 aa).

The next 3 membrane-spanning stretches (helical) occupy residues 5–27 (TLTE…GFTA), 32–51 (LYIG…KRLL), and 63–85 (LFFS…ALVA).

Its subcellular location is the cell membrane. This is an uncharacterized protein from Bacillus subtilis (strain 168).